Here is a 179-residue protein sequence, read N- to C-terminus: Large ribosomal subunit protein uL5 (179 aa).

It belongs to the universal ribosomal protein uL5 family. Part of the 50S ribosomal subunit; part of the 5S rRNA/L5/L18/L25 subcomplex. Contacts the 5S rRNA and the P site tRNA. Forms a bridge to the 30S subunit in the 70S ribosome.

In terms of biological role, this is one of the proteins that bind and probably mediate the attachment of the 5S RNA into the large ribosomal subunit, where it forms part of the central protuberance. In the 70S ribosome it contacts protein S13 of the 30S subunit (bridge B1b), connecting the 2 subunits; this bridge is implicated in subunit movement. Contacts the P site tRNA; the 5S rRNA and some of its associated proteins might help stabilize positioning of ribosome-bound tRNAs. The sequence is that of Large ribosomal subunit protein uL5 from Herminiimonas arsenicoxydans.